The following is a 304-amino-acid chain: Secreted mono- and diacylglycerol lipase LIP1 (304 aa).

The first 19 residues, 1 to 19 (MLFSRFVLLAFGSVAAVSA), serve as a signal peptide directing secretion. Residue threonine 32 is glycosylated (O-linked (Man...) threonine). A disulfide bond links cysteine 57 and cysteine 297. Serine 171 functions as the Nucleophile in the catalytic mechanism. Aspartate 228 is an active-site residue. An N-linked (GlcNAc...) asparagine glycan is attached at asparagine 253. Residue histidine 281 is part of the active site.

Belongs to the AB hydrolase superfamily. Lipase family. Class 3 subfamily.

It is found in the secreted. The protein localises to the cell wall. The enzyme catalyses a monoacylglycerol + H2O = glycerol + a fatty acid + H(+). It carries out the reaction a diacylglycerol + H2O = a monoacylglycerol + a fatty acid + H(+). RHC 80267, a well-known inhibitor of diacylglycerol lipases from mammals, also acts as an inhibitor for LIP1/SMG1. In terms of biological role, secreted lipase involved in Dandruff and seborrheic dermatitis (D/SD) probably via lipase-mediated breakdown of sebaceous lipids and release of irritating free fatty acids. Shows activity against monoglyceride and diglyceride substrates, but not triglyceride substrates and does not exhibit regio-selective production of diacylglycerols. Able to hydrolyze diacylglycerols such as distearin, dilinolein, dipalmitoylglycerol and dipalmitolein. Cleaves oleic acid from 1,2 isomers of diolein on both the 1 and the 2 position of the glycerol backbone, resulting mainly in free fatty acids but no monoolein is detected. Shows activity on monoolein and liberates mostly free fatty acids, but can also perform the reverse reaction and produce diolein. The polypeptide is Secreted mono- and diacylglycerol lipase LIP1 (Malassezia globosa (strain ATCC MYA-4612 / CBS 7966) (Dandruff-associated fungus)).